Here is a 352-residue protein sequence, read N- to C-terminus: Protein Wnt-4a (352 aa).

Residues 1-22 (MSSEYLIRSLLMLFLALFSANA) form the signal peptide. 11 disulfide bridges follow: Cys-78–Cys-89, Cys-128–Cys-136, Cys-138–Cys-155, Cys-206–Cys-220, Cys-208–Cys-215, Cys-280–Cys-312, Cys-297–Cys-307, Cys-311–Cys-351, Cys-327–Cys-342, Cys-329–Cys-339, and Cys-334–Cys-335. Residue Asn-88 is glycosylated (N-linked (GlcNAc...) asparagine). Ser-212 is lipidated: O-palmitoleoyl serine; by PORCN. Residue Asn-298 is glycosylated (N-linked (GlcNAc...) asparagine).

It belongs to the Wnt family. Palmitoleoylation is required for efficient binding to frizzled receptors. Depalmitoleoylation leads to Wnt signaling pathway inhibition. As to expression, caudal forebrain and neural keel, the floor plate, the gill slit and the developing pronephros.

It is found in the secreted. The protein localises to the extracellular space. The protein resides in the extracellular matrix. Its function is as follows. Ligand for members of the frizzled family of seven transmembrane receptors. Plays an important role in embryonic development. The polypeptide is Protein Wnt-4a (wnt4a) (Danio rerio (Zebrafish)).